A 240-amino-acid chain; its full sequence is 2,3-bisphosphoglycerate-dependent phosphoglycerate mutase 2 (240 aa).

Residues 8-15 (RHGQSEWN), 21-22 (TG), Arg-60, 87-90 (ERHY), Lys-98, 114-115 (RR), and 183-184 (GN) contribute to the substrate site. The active-site Tele-phosphohistidine intermediate is the His-9. Residue Glu-87 is the Proton donor/acceptor of the active site.

It belongs to the phosphoglycerate mutase family. BPG-dependent PGAM subfamily.

The enzyme catalyses (2R)-2-phosphoglycerate = (2R)-3-phosphoglycerate. Its pathway is carbohydrate degradation; glycolysis; pyruvate from D-glyceraldehyde 3-phosphate: step 3/5. Catalyzes the interconversion of 2-phosphoglycerate and 3-phosphoglycerate. The polypeptide is 2,3-bisphosphoglycerate-dependent phosphoglycerate mutase 2 (Bacillus cereus (strain ATCC 10987 / NRS 248)).